The sequence spans 99 residues: Nucleoid-associated protein EbfC (99 aa).

The protein belongs to the YbaB/EbfC family. As to quaternary structure, homodimer.

It localises to the cytoplasm. Its subcellular location is the nucleoid. Binds to DNA and alters its conformation. May be involved in regulation of gene expression, nucleoid organization and DNA protection. The protein is Nucleoid-associated protein EbfC of Borrelia hermsii (strain HS1 / DAH).